Consider the following 209-residue polypeptide: Response regulator protein VraR (209 aa).

In terms of domain architecture, Response regulatory spans 4-120; sequence KVLFVDDHEM…DIADAVRKTY (117 aa). D55 carries the 4-aspartylphosphate modification. An HTH luxR-type domain is found at 141-206; that stretch reads RAELYEMLTE…QAVIYAFQHN (66 aa). Positions 165–184 form a DNA-binding region, H-T-H motif; sequence NQEIASASHITIKTVKTHVS.

Phosphorylated by VraS.

It is found in the cytoplasm. In terms of biological role, member of the two-component regulatory system VraS/VraR involved in the control of the cell wall peptidoglycan biosynthesis. This chain is Response regulator protein VraR (vraR), found in Staphylococcus epidermidis (strain ATCC 35984 / DSM 28319 / BCRC 17069 / CCUG 31568 / BM 3577 / RP62A).